The sequence spans 422 residues: Beta-1,3-galactosyltransferase 2 (422 aa).

Topologically, residues 1-24 (MLQWRRRHCCFAKMTWNAKRSLFR) are cytoplasmic. Residues 25–45 (THLIGVLSLVFLFAMFLFFNH) traverse the membrane as a helical; Signal-anchor for type II membrane protein segment. At 46-422 (HDWLPGRAGF…AGRYRHRKLH (377 aa)) the chain is on the lumenal side. Residues asparagine 75, asparagine 100, asparagine 119, asparagine 176, and asparagine 226 are each glycosylated (N-linked (GlcNAc...) asparagine). Residues 90-110 (TLRPQTATNSNNTDLSPQGVT) form a disordered region.

Belongs to the glycosyltransferase 31 family. Mn(2+) serves as cofactor.

Its subcellular location is the golgi apparatus membrane. It carries out the reaction an N-acetyl-beta-D-glucosaminyl derivative + UDP-alpha-D-galactose = a beta-D-galactosyl-(1-&gt;3)-N-acetyl-beta-D-glucosaminyl derivative + UDP + H(+). It catalyses the reaction a beta-D-GlcNAc-(1-&gt;3)-beta-D-Gal-(1-&gt;4)-beta-D-Glc-(1&lt;-&gt;1)-Cer(d18:1(4E)) + UDP-alpha-D-galactose = a beta-D-Gal-(1-&gt;3)-beta-D-GlcNAc-(1-&gt;3)-beta-D-Gal-(1-&gt;4)-beta-D-Glc-(1&lt;-&gt;1')-Cer(d18:1(4E)) + UDP + H(+). The catalysed reaction is a neolactoside IV(3)-beta-GlcNAc-nLc4Cer(d18:1(4E)) + UDP-alpha-D-galactose = a neolactoside IV(3)-beta-[Gal-beta-(1-&gt;3)-GlcNAc]-nLc4Cer(d18:1(4E)) + UDP + H(+). It functions in the pathway protein modification; protein glycosylation. In terms of biological role, beta-1,3-galactosyltransferase that transfers galactose from UDP-galactose to substrates with a terminal beta-N-acetylglucosamine (beta-GlcNAc) residue. Can also utilize substrates with a terminal galactose residue, albeit with lower efficiency. Involved in the biosynthesis of the carbohydrate moieties of glycolipids and glycoproteins. Inactive towards substrates with terminal alpha-N-acetylglucosamine (alpha-GlcNAc) or alpha-N-acetylgalactosamine (alpha-GalNAc) residues. The polypeptide is Beta-1,3-galactosyltransferase 2 (B3GALT2) (Pongo abelii (Sumatran orangutan)).